The following is a 174-amino-acid chain: MTIILGIDPGSRVTGYGLIKESDRKIAYIDSGCIRTSNDVELSHKLLQIYDGICELMDHYSPTEVAIEQIFMHNNPNSALKLGHARGVAMVAAASHRVKICEYSAREIKQSVVGYGAAEKDQVSHMVVELLQLNRAPQKDAADALAIAICHSHMRNGLSKLIGSRGTKRRRMRL.

Active-site residues include Asp-8, Glu-68, and Asp-140. Positions 8, 68, and 140 each coordinate Mg(2+).

This sequence belongs to the RuvC family. Homodimer which binds Holliday junction (HJ) DNA. The HJ becomes 2-fold symmetrical on binding to RuvC with unstacked arms; it has a different conformation from HJ DNA in complex with RuvA. In the full resolvosome a probable DNA-RuvA(4)-RuvB(12)-RuvC(2) complex forms which resolves the HJ. It depends on Mg(2+) as a cofactor.

The protein localises to the cytoplasm. The catalysed reaction is Endonucleolytic cleavage at a junction such as a reciprocal single-stranded crossover between two homologous DNA duplexes (Holliday junction).. The RuvA-RuvB-RuvC complex processes Holliday junction (HJ) DNA during genetic recombination and DNA repair. Endonuclease that resolves HJ intermediates. Cleaves cruciform DNA by making single-stranded nicks across the HJ at symmetrical positions within the homologous arms, yielding a 5'-phosphate and a 3'-hydroxyl group; requires a central core of homology in the junction. The consensus cleavage sequence is 5'-(A/T)TT(C/G)-3'. Cleavage occurs on the 3'-side of the TT dinucleotide at the point of strand exchange. HJ branch migration catalyzed by RuvA-RuvB allows RuvC to scan DNA until it finds its consensus sequence, where it cleaves and resolves the cruciform DNA. This chain is Crossover junction endodeoxyribonuclease RuvC, found in Legionella pneumophila (strain Lens).